Reading from the N-terminus, the 120-residue chain is Meiosis expressed gene 1 protein homolog (120 aa).

Positions 1-45 are disordered; the sequence is MDGLAIGGVSAPMTAERPQQVKKQLSRRTPDAADGRKPTRMERAK. The span at 28-45 shows a compositional bias: basic and acidic residues; sequence RTPDAADGRKPTRMERAK.

This sequence belongs to the MEIG1 family.

This Oxyrrhis marina (Dinoflagellate) protein is Meiosis expressed gene 1 protein homolog.